Here is a 230-residue protein sequence, read N- to C-terminus: Large ribosomal subunit protein uL1 (230 aa).

It belongs to the universal ribosomal protein uL1 family. In terms of assembly, part of the 50S ribosomal subunit.

Functionally, binds directly to 23S rRNA. The L1 stalk is quite mobile in the ribosome, and is involved in E site tRNA release. Its function is as follows. Protein L1 is also a translational repressor protein, it controls the translation of the L11 operon by binding to its mRNA. The sequence is that of Large ribosomal subunit protein uL1 from Acidithiobacillus ferrooxidans (strain ATCC 53993 / BNL-5-31) (Leptospirillum ferrooxidans (ATCC 53993)).